The sequence spans 216 residues: Large ribosomal subunit protein uL4 (216 aa).

The disordered stretch occupies residues 47-77 (THKVKGMGEVSGTTKKPYRQKGTGNARQGSL).

This sequence belongs to the universal ribosomal protein uL4 family. Part of the 50S ribosomal subunit.

Its function is as follows. One of the primary rRNA binding proteins, this protein initially binds near the 5'-end of the 23S rRNA. It is important during the early stages of 50S assembly. It makes multiple contacts with different domains of the 23S rRNA in the assembled 50S subunit and ribosome. Forms part of the polypeptide exit tunnel. The chain is Large ribosomal subunit protein uL4 from Acidiphilium cryptum (strain JF-5).